Reading from the N-terminus, the 649-residue chain is 1-deoxy-D-xylulose-5-phosphate synthase (649 aa).

Thiamine diphosphate contacts are provided by residues histidine 84 and 125–127 (GHS). Position 156 (aspartate 156) interacts with Mg(2+). Thiamine diphosphate-binding positions include 157 to 158 (GS), asparagine 185, phenylalanine 292, and glutamate 385. Asparagine 185 is a binding site for Mg(2+).

It belongs to the transketolase family. DXPS subfamily. Homodimer. Mg(2+) is required as a cofactor. It depends on thiamine diphosphate as a cofactor.

The catalysed reaction is D-glyceraldehyde 3-phosphate + pyruvate + H(+) = 1-deoxy-D-xylulose 5-phosphate + CO2. It participates in metabolic intermediate biosynthesis; 1-deoxy-D-xylulose 5-phosphate biosynthesis; 1-deoxy-D-xylulose 5-phosphate from D-glyceraldehyde 3-phosphate and pyruvate: step 1/1. Functionally, catalyzes the acyloin condensation reaction between C atoms 2 and 3 of pyruvate and glyceraldehyde 3-phosphate to yield 1-deoxy-D-xylulose-5-phosphate (DXP). This chain is 1-deoxy-D-xylulose-5-phosphate synthase, found in Saccharophagus degradans (strain 2-40 / ATCC 43961 / DSM 17024).